A 198-amino-acid chain; its full sequence is Recombination protein RecR (198 aa).

The segment at 57-72 (CSTCQTLTDQDPCAIC) adopts a C4-type zinc-finger fold. The region spanning 80–175 (RMICVVEGVP…KVTRIAQGVP (96 aa)) is the Toprim domain.

The protein belongs to the RecR family.

Its function is as follows. May play a role in DNA repair. It seems to be involved in an RecBC-independent recombinational process of DNA repair. It may act with RecF and RecO. In Anaeromyxobacter dehalogenans (strain 2CP-C), this protein is Recombination protein RecR.